The primary structure comprises 367 residues: MTASRRTLMVMAGGTGGHVFPGLAVAHRMEAAGWRVVWLGNPAGMEATLVPKHGIPMEYVRFGGLRGKGLKTKLTLPFNLLRACWQSLGALRRVRPDVVLGMGGYITFPAGVMTALSGRPLVLHEQNSIAGLANKVLAKFAKRVLVAFPDALPHAEWTGNPIRAELARTEAPKARYASRSGPLHVLVVGGSLGAAALNEVVPRALALLAPGERPRIVHQAGAKHIDALKANYEAAGFAGGDDVRLVPFIDDMASAYAAADLVICRSGAMTVSEIAAVGVAALFVPFPYAVDDHQTTNAAFLADAGAAVLVQQRDLSAQLLADWLRGQSRASLAAMAERSRSLAKPEATDEVARVCAKVAGANLEQLQ.

Residues 15-17, N127, R163, S191, I249, and Q294 contribute to the UDP-N-acetyl-alpha-D-glucosamine site; that span reads TGG.

The protein belongs to the glycosyltransferase 28 family. MurG subfamily.

Its subcellular location is the cell inner membrane. It catalyses the reaction di-trans,octa-cis-undecaprenyl diphospho-N-acetyl-alpha-D-muramoyl-L-alanyl-D-glutamyl-meso-2,6-diaminopimeloyl-D-alanyl-D-alanine + UDP-N-acetyl-alpha-D-glucosamine = di-trans,octa-cis-undecaprenyl diphospho-[N-acetyl-alpha-D-glucosaminyl-(1-&gt;4)]-N-acetyl-alpha-D-muramoyl-L-alanyl-D-glutamyl-meso-2,6-diaminopimeloyl-D-alanyl-D-alanine + UDP + H(+). Its pathway is cell wall biogenesis; peptidoglycan biosynthesis. In terms of biological role, cell wall formation. Catalyzes the transfer of a GlcNAc subunit on undecaprenyl-pyrophosphoryl-MurNAc-pentapeptide (lipid intermediate I) to form undecaprenyl-pyrophosphoryl-MurNAc-(pentapeptide)GlcNAc (lipid intermediate II). This Burkholderia vietnamiensis (strain G4 / LMG 22486) (Burkholderia cepacia (strain R1808)) protein is UDP-N-acetylglucosamine--N-acetylmuramyl-(pentapeptide) pyrophosphoryl-undecaprenol N-acetylglucosamine transferase.